The chain runs to 1480 residues: UDP-N-acetylglucosamine--peptide N-acetylglucosaminyltransferase (1480 aa).

TPR repeat units lie at residues 38–71 (IFLY…SKQK), 113–146 (VQVL…STSN), 176–209 (ATIL…IKDP), and 288–321 (STIC…QPSF). Positions 468–485 (PQEKESPKSDKIASEKPL) are enriched in basic and acidic residues. Residues 468 to 497 (PQEKESPKSDKIASEKPLVESNPGRSRTPS) form a disordered region. 2 TPR repeats span residues 613 to 646 (YEPF…NPRF) and 648 to 680 (DGYL…DPDN). Residues 1093 to 1128 (LSLDGSDATSSSVDSGIGSRTHSEAPIGGGDKDEGA) form a disordered region. The span at 1099-1112 (DATSSSVDSGIGSR) shows a compositional bias: polar residues. UDP is bound by residues Q1269, K1272, 1333-1336 (HIRR), 1351-1353 (GST), and D1357.

This sequence belongs to the glycosyltransferase 41 family. O-GlcNAc transferase subfamily.

It localises to the cytoplasm. The protein resides in the nucleus. It catalyses the reaction L-seryl-[protein] + UDP-N-acetyl-alpha-D-glucosamine = 3-O-(N-acetyl-beta-D-glucosaminyl)-L-seryl-[protein] + UDP + H(+). The catalysed reaction is L-threonyl-[protein] + UDP-N-acetyl-alpha-D-glucosamine = 3-O-(N-acetyl-beta-D-glucosaminyl)-L-threonyl-[protein] + UDP + H(+). It functions in the pathway protein modification; protein glycosylation. Functionally, catalyzes the transfer of a single N-acetylglucosamine from UDP-GlcNAc to a serine or threonine residue in cytoplasmic and nuclear proteins resulting in their modification with a beta-linked N-acetylglucosamine (O-GlcNAc). This is UDP-N-acetylglucosamine--peptide N-acetylglucosaminyltransferase from Giardia intestinalis (strain ATCC 50803 / WB clone C6) (Giardia lamblia).